The chain runs to 932 residues: 2-oxoglutarate dehydrogenase E1 component (932 aa).

The protein belongs to the alpha-ketoglutarate dehydrogenase family. Homodimer. Part of the 2-oxoglutarate dehydrogenase (OGDH) complex composed of E1 (2-oxoglutarate dehydrogenase), E2 (dihydrolipoamide succinyltransferase) and E3 (dihydrolipoamide dehydrogenase); the complex contains multiple copies of the three enzymatic components (E1, E2 and E3). It depends on thiamine diphosphate as a cofactor.

The enzyme catalyses N(6)-[(R)-lipoyl]-L-lysyl-[protein] + 2-oxoglutarate + H(+) = N(6)-[(R)-S(8)-succinyldihydrolipoyl]-L-lysyl-[protein] + CO2. In terms of biological role, E1 component of the 2-oxoglutarate dehydrogenase (OGDH) complex which catalyzes the decarboxylation of 2-oxoglutarate, the first step in the conversion of 2-oxoglutarate to succinyl-CoA and CO(2). The chain is 2-oxoglutarate dehydrogenase E1 component from Staphylococcus aureus (strain USA300).